The sequence spans 55 residues: Large ribosomal subunit protein bL33 (55 aa).

It belongs to the bacterial ribosomal protein bL33 family.

This is Large ribosomal subunit protein bL33 from Zymomonas mobilis subsp. mobilis (strain ATCC 31821 / ZM4 / CP4).